The sequence spans 184 residues: Tumor necrosis factor alpha-induced protein 8-like protein 2 (184 aa).

Phosphoserine is present on Ser-3.

This sequence belongs to the TNFAIP8 family. TNFAIP8L2 subfamily. In terms of assembly, may interact with CASP8; however, such result is unclear since could not reproduce the interaction with CASP8. Interacts with RAC1. Phosphorylated by TAK1/MAP3K7; this phosphorylation triggers association with BTRC and subsequent ubiquitination and degradation. In terms of processing, ubiquitinated in a BTRC-depdent manner; leading to degradation mediated through the proteasome pathway.

It is found in the cytoplasm. The protein localises to the nucleus. Its subcellular location is the lysosome. In terms of biological role, acts as a negative regulator of innate and adaptive immunity by maintaining immune homeostasis. Plays a regulatory role in the Toll-like signaling pathway by determining the strength of LPS-induced signaling and gene expression. Inhibits TCR-mediated T-cell activation and negatively regulate T-cell function to prevent hyperresponsiveness. Also inhibits autolysosome formation via negatively modulating MTOR activation by interacting with RAC1 and promoting the disassociation of the RAC1-MTOR complex. Plays an essential role in NK-cell biology by acting as a checkpoint and displaying an expression pattern correlating with NK-cell maturation process and by negatively regulating NK-cell maturation and antitumor immunity. Mechanistically, suppresses IL-15-triggered mTOR activity in NK-cells. The chain is Tumor necrosis factor alpha-induced protein 8-like protein 2 (Tnfaip8l2) from Rattus norvegicus (Rat).